The primary structure comprises 142 residues: MVKLSEDQEHYIKGVWKDVDHKQITAKALERVFVVYPWTTRLFSKLQGLFSANDIGVQQHADKVQRALGEAIDDLKKVEINFQNLSGKHQEIGVDTQNFKLLGQTFMVELALHYKKTFRPKEHAAAYKFFRLVAEALSSNYH.

The Globin domain occupies 3 to 142 (KLSEDQEHYI…VAEALSSNYH (140 aa)). Heme b contacts are provided by His60 and His89.

It belongs to the globin family. In terms of assembly, heterotetramer of two alpha chains and two beta chains. As to expression, red blood cells.

Its function is as follows. Involved in oxygen transport from gills to the various peripheral tissues. The polypeptide is Hemoglobin subunit beta (HBB) (Hemitrygon akajei (Red stingray)).